The chain runs to 208 residues: Small ribosomal subunit protein uS4 (208 aa).

Residues 98–159 (RRLDNVVYRL…KSRNVAAISE (62 aa)) form the S4 RNA-binding domain.

Belongs to the universal ribosomal protein uS4 family. In terms of assembly, part of the 30S ribosomal subunit. Contacts protein S5. The interaction surface between S4 and S5 is involved in control of translational fidelity.

In terms of biological role, one of the primary rRNA binding proteins, it binds directly to 16S rRNA where it nucleates assembly of the body of the 30S subunit. With S5 and S12 plays an important role in translational accuracy. The chain is Small ribosomal subunit protein uS4 from Trichlorobacter lovleyi (strain ATCC BAA-1151 / DSM 17278 / SZ) (Geobacter lovleyi).